Reading from the N-terminus, the 287-residue chain is Elongation factor Ts (287 aa).

The segment at 80-83 (TDFL) is involved in Mg(2+) ion dislocation from EF-Tu.

The protein belongs to the EF-Ts family.

The protein resides in the cytoplasm. Associates with the EF-Tu.GDP complex and induces the exchange of GDP to GTP. It remains bound to the aminoacyl-tRNA.EF-Tu.GTP complex up to the GTP hydrolysis stage on the ribosome. This chain is Elongation factor Ts, found in Pseudomonas putida (strain GB-1).